The primary structure comprises 92 residues: MHITSIAIVFFAAMGAVASPIATESDDLDARDVQLSKFGGECSLKHNTCTYLKGGKNHVVNCGSAANKKCKSDRHHCEYDEHHKRVDCQTPV.

Positions 1–18 (MHITSIAIVFFAAMGAVA) are cleaved as a signal peptide. Positions 19–34 (SPIATESDDLDARDVQ) are excised as a propeptide. 3 disulfide bridges follow: cysteine 42–cysteine 70, cysteine 49–cysteine 77, and cysteine 62–cysteine 88.

Belongs to the antifungal protein pafB family.

The protein localises to the secreted. It is found in the host cytoplasm. Functionally, antifungal protein that acts as an inhibitor of growth of human pathogenic molds and yeasts. This is Antifungal protein B from Penicillium rubens (strain ATCC 28089 / DSM 1075 / NRRL 1951 / Wisconsin 54-1255) (Penicillium chrysogenum).